The chain runs to 692 residues: Aspartate--tRNA ligase, mitochondrial (692 aa).

A mitochondrion-targeting transit peptide spans M1–N61. An L-aspartate-binding site is contributed by E264. The segment at Q287–K290 is aspartate. R309 contributes to the L-aspartate binding site. ATP contacts are provided by residues R309–E311 and E590. R597 contributes to the L-aspartate binding site. G642–R645 contacts ATP.

The protein belongs to the class-II aminoacyl-tRNA synthetase family. Type 1 subfamily.

The protein localises to the mitochondrion matrix. It carries out the reaction tRNA(Asp) + L-aspartate + ATP = L-aspartyl-tRNA(Asp) + AMP + diphosphate. This is Aspartate--tRNA ligase, mitochondrial (maspS) from Dictyostelium discoideum (Social amoeba).